The following is a 275-amino-acid chain: Calcium-binding protein 4 (275 aa).

The segment covering 1 to 12 has biased composition (polar residues); sequence MTTEQARGQQGP. The disordered stretch occupies residues 1-112; it reads MTTEQARGQQ…SLHDAAQRTY (112 aa). Residues 38-55 show a composition bias toward basic residues; the sequence is TRKRSKKERGLRGSRKRT. Ser-42 carries the phosphoserine modification. 4 consecutive EF-hand domains span residues 129-164, 183-200, 206-241, and 243-275; these read EELD…LGYM, GRVD…KLRE, LGVR…LLGE, and LAGP…LSRH. Ca(2+) is bound by residues Asp-142, Asp-144, Asp-146, Tyr-148, and Glu-153. Residues Asp-219, Asp-221, Asp-223, Arg-225, Glu-230, Asp-256, Asn-258, Asp-260, Thr-262, and Glu-267 each contribute to the Ca(2+) site.

As to quaternary structure, interacts with CACNA1F and CACNA1D (via IQ domain) in a calcium independent manner. Interacts (via N-terminus) with UNC119. Phosphorylated. Phosphorylation levels change with the light conditions and regulate the activity. Expressed in retina and in the inner hair cells (IHC) of the cochlea.

The protein localises to the cytoplasm. Its subcellular location is the presynapse. Involved in normal synaptic function through regulation of Ca(2+) influx and neurotransmitter release in photoreceptor synaptic terminals and in auditory transmission. Modulator of CACNA1D and CACNA1F, suppressing the calcium-dependent inactivation and shifting the activation range to more hyperpolarized voltages. This is Calcium-binding protein 4 (CABP4) from Homo sapiens (Human).